The following is a 336-amino-acid chain: Uroporphyrinogen decarboxylase (336 aa).

Substrate is bound by residues 24–28, Asp-73, Tyr-142, Ser-197, and His-312; that span reads RQVGR.

The protein belongs to the uroporphyrinogen decarboxylase family. In terms of assembly, homodimer.

The protein resides in the cytoplasm. It carries out the reaction uroporphyrinogen III + 4 H(+) = coproporphyrinogen III + 4 CO2. Its pathway is porphyrin-containing compound metabolism; protoporphyrin-IX biosynthesis; coproporphyrinogen-III from 5-aminolevulinate: step 4/4. In terms of biological role, catalyzes the decarboxylation of four acetate groups of uroporphyrinogen-III to yield coproporphyrinogen-III. This Chlamydia trachomatis serovar L2 (strain ATCC VR-902B / DSM 19102 / 434/Bu) protein is Uroporphyrinogen decarboxylase.